A 135-amino-acid chain; its full sequence is UPF0299 membrane protein PC1_1498 (135 aa).

Transmembrane regions (helical) follow at residues 5 to 25, 30 to 50, 63 to 83, and 93 to 113; these read FIVCWQYLRAFALIYLCLLAG, ALLPFTIPGSIIGMLVLFTLL, GCHLLIRHMALLFVPIGVGVM, and FGPIVVSCLISTFIVMLVVGF.

This sequence belongs to the UPF0299 family.

The protein localises to the cell inner membrane. This chain is UPF0299 membrane protein PC1_1498, found in Pectobacterium carotovorum subsp. carotovorum (strain PC1).